Consider the following 88-residue polypeptide: Small ribosomal subunit protein bS16 (88 aa).

The protein belongs to the bacterial ribosomal protein bS16 family.

In Pelotomaculum thermopropionicum (strain DSM 13744 / JCM 10971 / SI), this protein is Small ribosomal subunit protein bS16.